The primary structure comprises 2698 residues: Chromodomain-helicase-DNA-binding protein 6 (2698 aa).

Basic and acidic residues-rich tracts occupy residues 1-12 (MKMKIQKKEKQL), 100-115 (EPGE…DREP), and 122-171 (EPKE…KRSC). Positions 1-243 (MKMKIQKKEK…KRRSGRQVKR (243 aa)) are disordered. The interval 1–746 (MKMKIQKKEK…MMELRKCCNH (746 aa)) is required for DNA-dependent ATPase activity. The segment covering 213–224 (QSLPNPSLQSPE) has biased composition (low complexity). Chromo domains lie at 291-342 (NIIE…KDPR) and 374-438 (IEID…KPVE). Residues 472–646 (LFNWYNRKNC…FSLLNFLEPS (175 aa)) enclose the Helicase ATP-binding domain. Residue 485–492 (DEMGLGKT) participates in ATP binding. The short motif at 597–600 (DEAH) is the DEAH box element. One can recognise a Helicase C-terminal domain in the interval 786 to 955 (LIDKLLPKLI…LSKMEVEDLL (170 aa)). The disordered stretch occupies residues 1318–1370 (SLSAEQGVTDGTSDIPERGNIDKEDSAEDKVDGLQKQTASPSDGSDGIFGEKK). The span at 1320-1329 (SAEQGVTDGT) shows a compositional bias: polar residues. Residues 1332 to 1350 (IPERGNIDKEDSAEDKVDG) show a composition bias toward basic and acidic residues. The 55-residue stretch at 1435–1489 (RWTRREQADFYRTVSSFGVVYDQEKEAFDWTQFRAISRLDKKSDENLEHYFHSFV) folds into the Myb-like domain. Residues 1707 to 1730 (EPRSFQEAPSTNMQSRKKTVTVSA) are compositionally biased toward polar residues. A disordered region spans residues 1707–1731 (EPRSFQEAPSTNMQSRKKTVTVSAS). Ser1852 is subject to Phosphoserine. Disordered regions lie at residues 1935–2046 (GLGS…ASGI), 2111–2137 (LPTP…HSFS), 2308–2337 (TTLN…QAEK), 2359–2387 (PGFG…IGSL), 2538–2587 (ASLA…PTIT), and 2626–2698 (QGRH…DDTN). Composition is skewed to basic and acidic residues over residues 1943 to 1955 (GEKP…DPYR), 1975 to 1991 (FKLK…ESSE), and 2004 to 2024 (SEPK…KDGA). Composition is skewed to low complexity over residues 2117-2127 (SSSAGSRSSLS) and 2315-2336 (PEGP…SQAE). Residues 2538–2550 (ASLASTKSGASAT) show a composition bias toward low complexity. A compositionally biased stretch (basic and acidic residues) spans 2552-2573 (KTTEDELSGRDVKADSLVEDKP). 2 stretches are compositionally biased toward polar residues: residues 2578–2587 (FSDQSEPTIT) and 2664–2675 (SDQNCTESSVTV). Over residues 2677 to 2698 (PEREHVAQAREEGLKDSNDDTN) the composition is skewed to basic and acidic residues.

Belongs to the SNF2/RAD54 helicase family. Interacts with NFE2L2; involved in activation of the transcription. May interact with PPARA. As to expression, widely expressed.

It localises to the nucleus. The protein localises to the nucleoplasm. The enzyme catalyses ATP + H2O = ADP + phosphate + H(+). ATP-dependent chromatin-remodeling factor. Regulates transcription by disrupting nucleosomes in a largely non-sliding manner which strongly increases the accessibility of chromatin. Activates transcription of specific genes in response to oxidative stress through interaction with NFE2L2. The protein is Chromodomain-helicase-DNA-binding protein 6 (Chd6) of Rattus norvegicus (Rat).